Here is a 464-residue protein sequence, read N- to C-terminus: GDNF family receptor alpha-2 (464 aa).

A signal peptide spans 1–21 (MILANVFCLFFFLDETLRSLA). 14 disulfides stabilise this stretch: Cys-40-Cys-93, Cys-47-Cys-53, Cys-63-Cys-78, Cys-95-Cys-105, Cys-161-Cys-222, Cys-168-Cys-174, Cys-185-Cys-200, Cys-195-Cys-241, Cys-224-Cys-229, Cys-251-Cys-323, Cys-258-Cys-264, Cys-275-Cys-293, Cys-285-Cys-347, and Cys-325-Cys-335. The N-linked (GlcNAc...) asparagine glycan is linked to Asn-52. Residues Asn-357 and Asn-413 are each glycosylated (N-linked (GlcNAc...) asparagine). The GPI-anchor amidated serine moiety is linked to residue Ser-444. A propeptide spans 445 to 464 (RARPSAALTVLSVLMLKLAL) (removed in mature form).

The protein belongs to the GDNFR family. As to quaternary structure, interacts with NRTN ligand and RET: forms a 2:2:2 ternary complex composed of NRTN ligand, GFRA2 and RET receptor. Also forms a 4:4:4 tetrameric complex composed of 4 copies of NRTN ligand, GFRA2 and RET receptor, which prevents endocytosis of RET. Interacts with SORL1.

The protein resides in the cell membrane. Functionally, receptor for neurturin (NRTN), a growth factor that supports the survival of sympathetic neurons. NRTN-binding leads to autophosphorylation and activation of the RET receptor. Also able to mediate GDNF signaling through the RET tyrosine kinase receptor. This is GDNF family receptor alpha-2 (GFRA2) from Pongo abelii (Sumatran orangutan).